The following is a 307-amino-acid chain: Ribonuclease Z (307 aa).

Positions 63, 65, 67, 68, 140, 211, and 269 each coordinate Zn(2+). The active-site Proton acceptor is D67.

The protein belongs to the RNase Z family. Homodimer. Zn(2+) is required as a cofactor.

It catalyses the reaction Endonucleolytic cleavage of RNA, removing extra 3' nucleotides from tRNA precursor, generating 3' termini of tRNAs. A 3'-hydroxy group is left at the tRNA terminus and a 5'-phosphoryl group is left at the trailer molecule.. Its function is as follows. Zinc phosphodiesterase, which displays some tRNA 3'-processing endonuclease activity. Probably involved in tRNA maturation, by removing a 3'-trailer from precursor tRNA. The polypeptide is Ribonuclease Z (Bacillus subtilis (strain 168)).